Consider the following 131-residue polypeptide: Bacteriohemerythrin (131 aa).

H20, E23, H56, E60, H75, H79, H117, and D122 together coordinate Fe cation.

Belongs to the hemerythrin family. As to quaternary structure, monomer.

In terms of biological role, oxygen-binding protein. May be involved in a storage mechanism or for delivery to oxygen-requiring enzymes. The oxygen-binding site contains two iron atoms. The protein is Bacteriohemerythrin of Aquifex aeolicus (strain VF5).